Here is a 502-residue protein sequence, read N- to C-terminus: MEFSVKSGSPEKQRSACIVVGVYEPRRLSGIAEQLDKISEGYISNLLRRGDLEGKPGQMLLLHHVPNVLSERVLLVGCGKERELDERQYKQIITKTIKTLNETGSMEAVCFLTELHVKGRDTYWKVREAVETTQNSLYSFDALKSAKGETRRPLRKLVFNVPTRRELTVGERAIEHGMAVSAGMRLCRDVANMPPNICNPAYLASQARQMGENSEELTVTTVGEEQMAKLGMNSYLAVGRGSDNESIMTVMEYKGAVDNTEKPIVLVGKGLTFDSGGISLKPGEGMDEMKYDMGGAAGVIGAMKALCDMKLPINVVAILAGCENMPSSNAYRPGDILTTMSGQTVEVLNTDAEGRLVLCDVLTYVERFDPELVVDTATLTGACVIALGKHASGLFSGHNPLAHELLNAGEQSGDRAWRLPIWDEYQEHLESPFADMTNLGGRPAGAITAACFLSRFTKKYNWAHIDVAGTAWNSGANKGSTGRPVPLLTQFLINRAGVEQGD.

Residues K269 and D274 each coordinate Mn(2+). Residue K281 is part of the active site. 3 residues coordinate Mn(2+): D292, D351, and E353. R355 is a catalytic residue.

Belongs to the peptidase M17 family. The cofactor is Mn(2+).

The protein localises to the cytoplasm. The catalysed reaction is Release of an N-terminal amino acid, Xaa-|-Yaa-, in which Xaa is preferably Leu, but may be other amino acids including Pro although not Arg or Lys, and Yaa may be Pro. Amino acid amides and methyl esters are also readily hydrolyzed, but rates on arylamides are exceedingly low.. It catalyses the reaction Release of an N-terminal amino acid, preferentially leucine, but not glutamic or aspartic acids.. Functionally, presumably involved in the processing and regular turnover of intracellular proteins. Catalyzes the removal of unsubstituted N-terminal amino acids from various peptides. The protein is Probable cytosol aminopeptidase of Shewanella sediminis (strain HAW-EB3).